A 121-amino-acid chain; its full sequence is Basic phospholipase A2 VRV-PL-VIIIa (121 aa).

7 disulfide bridges follow: cysteine 26-cysteine 115, cysteine 28-cysteine 44, cysteine 43-cysteine 95, cysteine 49-cysteine 121, cysteine 50-cysteine 88, cysteine 57-cysteine 81, and cysteine 75-cysteine 86. Positions 27, 29, and 31 each coordinate Ca(2+). Histidine 47 is an active-site residue. Aspartate 48 serves as a coordination point for Ca(2+). Aspartate 89 is a catalytic residue.

Belongs to the phospholipase A2 family. Group II subfamily. D49 sub-subfamily. In terms of assembly, monomer. Ca(2+) serves as cofactor. In terms of tissue distribution, expressed by the venom gland.

It is found in the secreted. It catalyses the reaction a 1,2-diacyl-sn-glycero-3-phosphocholine + H2O = a 1-acyl-sn-glycero-3-phosphocholine + a fatty acid + H(+). Oxyphenbutazone (OPB), anisic acid and atropine inhibit the enzymatic activity by binding at the substrate-binding site. P-coumaric acid, resveratrol, spermidine, corticosterone and gramine derivative inhibit the enzymatic activity by binding at the substrate-binding site. Snake venom phospholipase A2 (PLA2) that shows weak neurotoxicity and medium anticoagulant effects by binding to factor Xa (F10) and inhibiting the prothrombinase activity (IC(50) is 130 nM). It also damages vital organs such as lung, liver and kidney, displays edema-inducing activities when injected into the foot pads of mice and induces necrosis of muscle cells when injected into the thigh muscle. Has a low enzymatic activity. PLA2 catalyzes the calcium-dependent hydrolysis of the 2-acyl groups in 3-sn-phosphoglycerides. This Daboia russelii (Russel's viper) protein is Basic phospholipase A2 VRV-PL-VIIIa.